An 82-amino-acid chain; its full sequence is Delta-conotoxin-like CnVIA (82 aa).

Positions 1–22 (MKLTCMMIVAVLFLTAWTFVTA) are cleaved as a signal peptide. Positions 23–49 (DDSRNGLENLSPKARHEMKNPEASKSN) are excised as a propeptide. 3 disulfides stabilise this stretch: Cys54/Cys69, Cys61/Cys73, and Cys68/Cys78.

The protein belongs to the conotoxin O1 superfamily. In terms of tissue distribution, expressed by the venom duct.

Its subcellular location is the secreted. Its function is as follows. Delta-conotoxins bind to site 6 of voltage-gated sodium channels (Nav) and inhibit the inactivation process. The sequence is that of Delta-conotoxin-like CnVIA from Conus consors (Singed cone).